The sequence spans 136 residues: Histone H3 (136 aa).

It belongs to the histone H3 family. As to quaternary structure, the nucleosome is a histone octamer containing two molecules each of H2A, H2B, H3 and H4 assembled in one H3-H4 heterotetramer and two H2A-H2B heterodimers. The octamer wraps approximately 147 bp of DNA.

The protein resides in the nucleomorph. The protein localises to the chromosome. In terms of biological role, core component of nucleosome. Nucleosomes wrap and compact DNA into chromatin, limiting DNA accessibility to the cellular machineries which require DNA as a template. Histones thereby play a central role in transcription regulation, DNA repair, DNA replication and chromosomal stability. DNA accessibility is regulated via a complex set of post-translational modifications of histones, also called histone code, and nucleosome remodeling. This Guillardia theta (Cryptophyte) protein is Histone H3.